Consider the following 1500-residue polypeptide: Myosin-8 (1500 aa).

In terms of domain architecture, Myosin N-terminal SH3-like spans 8 to 57 (AVGSHVWVEDPDEAWLDGEVVEINGDQIKVLCASGKQVVVKDSNIYPKDV). One can recognise a Myosin motor domain in the interval 62–732 (SGVEDMTRLA…QMADLDTRRT (671 aa)). ATP-binding positions include 156 to 163 (GESGAGKT) and 210 to 218 (NNNSSRFGK). Actin-binding stretches follow at residues 496–530 (LIEKKPGGIIALLDEACMFPRSTHETFAQKLYQTY), 532–555 (NHKRFTKPKLARSDFTICHYAGDV), 590–613 (FPPVSDDSKQSKFSSIGTRFKQQL), and 613–635 (LVSLLEILNTTEPHYIRCIKPNN). IQ domains follow at residues 735-764 (LGRSASIIQRKVRSYLAQKTFIQLRISATQ), 758-787 (LRISATQIQAVCRGYLARSIYEGMRREAAA), 783-812 (REAAALKIQRDLRKFLARKAYTELFSATIL), 806-835 (LFSATILIQAGMRGMVSRKELCLRRQTKAA), 831-860 (QTKAATIIQTRCRVYLARLHYRKLKKAAIT), and 854-883 (LKKAAITTQCAWRGKVARKELKNLKMAARE). A coiled-coil region spans residues 884 to 1049 (TGALQEAKNK…TEKQIMLQQT (166 aa)). Positions 1146-1447 (DRLIEMIGSA…ISSMRALMTE (302 aa)) constitute a Dilute domain.

It belongs to the TRAFAC class myosin-kinesin ATPase superfamily. Myosin family. Plant myosin class XI subfamily. As to quaternary structure, homodimer.

The protein resides in the cytoplasm. Functionally, myosin heavy chain that is required for the cell cycle-regulated transport of various organelles and proteins for their segregation. Functions by binding with its tail domain to receptor proteins on organelles and exerting force with its N-terminal motor domain against actin filaments, thereby transporting its cargo along polarized actin cables. This Arabidopsis thaliana (Mouse-ear cress) protein is Myosin-8 (XI-B).